The primary structure comprises 433 residues: Protein slt1 (433 aa).

Disordered stretches follow at residues serine 159–alanine 184, asparagine 200–serine 234, and serine 252–alanine 433. 2 stretches are compositionally biased toward polar residues: residues aspartate 172 to alanine 184 and threonine 215 to valine 228. Phosphoserine occurs at positions 227, 229, and 269. Over residues isoleucine 343–aspartate 353 the composition is skewed to basic and acidic residues. Over residues glutamate 385–histidine 421 the composition is skewed to polar residues. Residues serine 409, serine 415, and serine 418 each carry the phosphoserine modification.

This Schizosaccharomyces pombe (strain 972 / ATCC 24843) (Fission yeast) protein is Protein slt1 (slt1).